Consider the following 177-residue polypeptide: Ferritin, heavy subunit (177 aa).

Residues 7–156 (QNFHQDCEAA…DWVTNLRRMG (150 aa)) form the Ferritin-like diiron domain. Residues glutamate 24, glutamate 59, histidine 62, glutamate 104, and glutamine 138 each coordinate Fe cation.

It belongs to the ferritin family. In terms of assembly, oligomer of 24 subunits. There are at least two types of subunits. The functional molecule forms a roughly spherical shell with a diameter of 12 nm and contains a central cavity into which the insoluble mineral iron core is deposited. As to expression, liver, gonads, head kidney, heart and spleen.

The enzyme catalyses 4 Fe(2+) + O2 + 4 H(+) = 4 Fe(3+) + 2 H2O. Functionally, stores iron in a soluble, non-toxic, readily available form. Important for iron homeostasis. Has ferroxidase activity. Iron is taken up in the ferrous form and deposited as ferric hydroxides after oxidation. The chain is Ferritin, heavy subunit from Salmo salar (Atlantic salmon).